The following is a 158-amino-acid chain: NAD(P)H-quinone oxidoreductase subunit J, chloroplastic (158 aa).

This sequence belongs to the complex I 30 kDa subunit family. As to quaternary structure, NDH is composed of at least 16 different subunits, 5 of which are encoded in the nucleus.

Its subcellular location is the plastid. The protein resides in the chloroplast thylakoid membrane. The enzyme catalyses a plastoquinone + NADH + (n+1) H(+)(in) = a plastoquinol + NAD(+) + n H(+)(out). The catalysed reaction is a plastoquinone + NADPH + (n+1) H(+)(in) = a plastoquinol + NADP(+) + n H(+)(out). In terms of biological role, NDH shuttles electrons from NAD(P)H:plastoquinone, via FMN and iron-sulfur (Fe-S) centers, to quinones in the photosynthetic chain and possibly in a chloroplast respiratory chain. The immediate electron acceptor for the enzyme in this species is believed to be plastoquinone. Couples the redox reaction to proton translocation, and thus conserves the redox energy in a proton gradient. The protein is NAD(P)H-quinone oxidoreductase subunit J, chloroplastic of Eucalyptus globulus subsp. globulus (Tasmanian blue gum).